We begin with the raw amino-acid sequence, 173 residues long: Peptide deformylase (173 aa).

Cysteine 91 and histidine 133 together coordinate Fe cation. Residue glutamate 134 is part of the active site. Histidine 137 serves as a coordination point for Fe cation.

Belongs to the polypeptide deformylase family. Fe(2+) is required as a cofactor.

The enzyme catalyses N-terminal N-formyl-L-methionyl-[peptide] + H2O = N-terminal L-methionyl-[peptide] + formate. Its function is as follows. Removes the formyl group from the N-terminal Met of newly synthesized proteins. Requires at least a dipeptide for an efficient rate of reaction. N-terminal L-methionine is a prerequisite for activity but the enzyme has broad specificity at other positions. The polypeptide is Peptide deformylase (Blochmanniella pennsylvanica (strain BPEN)).